Consider the following 389-residue polypeptide: MNIEYPYSIHIIDKNKVPIYDQGNLFHTEKSSRLSHVSRGLLDHLFTFSSDNTERVRKLHILADYLYLLESERESYKNEWISLKDQVSLLQKQNSELRARIATNKEIIEGLREPVKKPIYTTQDKERLRVFFCEERSMEYIYYHIKRLAQQSYYSHLNNLQKDCEPFRGVYMSFLTNVKFLVLCEAGYWTVPDIETNTTESILSLSQKKGEDLLQKGVVIFNELEGGYQLSPRFIGDLYAHGFIKQINFTTKVPEGLPPIIAEKLQDYKFPGSNTVLIEREIPRWNFNEMKRETQMRTNLYIFKNYRCFYGYSPLRPYEPITPEEFGFDYYSWENMVDEDEGEVVYISKYTKIIKVTKEHAWAWPEHDGDTMSCTTSIEDEWIHRMDNA.

The sequence is that of Protein P4 from Rice tungro bacilliform virus (isolate Philippines) (RTBV).